Consider the following 267-residue polypeptide: Transmembrane protein 106B (267 aa).

The Cytoplasmic segment spans residues 1–92 (MGKALSHVAK…QRLRPRRTKL (92 aa)). Residues 93 to 113 (YVMASVILCLLLCTLAVFFLF) traverse the membrane as a helical segment. At 114–267 (PRSIDVNYVG…EYSLNTPLTG (154 aa)) the chain is on the lumenal side. Residues asparagine 141, asparagine 147, asparagine 160, and asparagine 179 are each glycosylated (N-linked (GlcNAc...) asparagine). Cysteines 210 and 249 form a disulfide. N-linked (GlcNAc...) asparagine glycosylation occurs at asparagine 252.

It belongs to the TMEM106 family.

It is found in the late endosome membrane. The protein localises to the lysosome membrane. The protein resides in the cell membrane. Its function is as follows. In neurons, involved in the transport of late endosomes/lysosomes. May be involved in dendrite morphogenesis and maintenance by regulating lysosomal trafficking. May act as a molecular brake for retrograde transport of late endosomes/lysosomes, possibly via its interaction with MAP6. In motoneurons, may mediate the axonal transport of lysosomes and axonal sorting at the initial segment. It remains unclear whether TMEM106B affects the transport of moving lysosomes in the anterograde or retrograde direction in neurites and whether it is particularly important in the sorting of lysosomes in axons or in dendrites. In neurons, may also play a role in the regulation of lysosomal size and responsiveness to stress. Required for proper lysosomal acidification. In Danio rerio (Zebrafish), this protein is Transmembrane protein 106B (tmem106b).